Here is a 429-residue protein sequence, read N- to C-terminus: Trigger factor (429 aa).

Positions 164–249 (GDWAVIDHEG…LKALKVRQAP (86 aa)) constitute a PPIase FKBP-type domain.

Belongs to the FKBP-type PPIase family. Tig subfamily.

The protein localises to the cytoplasm. The enzyme catalyses [protein]-peptidylproline (omega=180) = [protein]-peptidylproline (omega=0). Functionally, involved in protein export. Acts as a chaperone by maintaining the newly synthesized protein in an open conformation. Functions as a peptidyl-prolyl cis-trans isomerase. In Anaeromyxobacter dehalogenans (strain 2CP-C), this protein is Trigger factor.